The primary structure comprises 188 residues: MNGVLLAIGVLLPICLASGALLGYAAVRLRVQGDPVAERVNALLPQTQCGQCGYPGCKPYAEAIAAGDRINKCPPGGEATIQALADLLDLEPEPLDAAEETPPRVAYIREAECIGCTKCIQACPVDAIVGAARLMHTVIADECTGCDLCLEPCPVDCIEMREIAPDVRHWKWPPPSPRLIASDRERAA.

Residues 1-26 are hydrophobic; that stretch reads MNGVLLAIGVLLPICLASGALLGYAA. The 59-residue stretch at 32–90 folds into the 4Fe-4S domain; the sequence is QGDPVAERVNALLPQTQCGQCGYPGCKPYAEAIAAGDRINKCPPGGEATIQALADLLDL. [4Fe-4S] cluster contacts are provided by Cys49, Cys52, Cys57, Cys73, Cys113, Cys116, Cys119, Cys123, Cys143, Cys146, Cys149, and Cys153. 2 consecutive 4Fe-4S ferredoxin-type domains span residues 104–133 and 134–163; these read RVAY…GAAR and LMHT…MREI.

It belongs to the 4Fe4S bacterial-type ferredoxin family. RnfB subfamily. The complex is composed of six subunits: RnfA, RnfB, RnfC, RnfD, RnfE and RnfG. It depends on [4Fe-4S] cluster as a cofactor.

It is found in the cell inner membrane. In terms of biological role, part of a membrane-bound complex that couples electron transfer with translocation of ions across the membrane. The protein is Ion-translocating oxidoreductase complex subunit B of Pseudomonas paraeruginosa (strain DSM 24068 / PA7) (Pseudomonas aeruginosa (strain PA7)).